The chain runs to 1291 residues: DNA-directed RNA polymerase subunit beta (1291 aa).

It belongs to the RNA polymerase beta chain family. The RNAP catalytic core consists of 2 alpha, 1 beta, 1 beta' and 1 omega subunit. When a sigma factor is associated with the core the holoenzyme is formed, which can initiate transcription.

It carries out the reaction RNA(n) + a ribonucleoside 5'-triphosphate = RNA(n+1) + diphosphate. Its function is as follows. DNA-dependent RNA polymerase catalyzes the transcription of DNA into RNA using the four ribonucleoside triphosphates as substrates. The chain is DNA-directed RNA polymerase subunit beta from Cytophaga hutchinsonii (strain ATCC 33406 / DSM 1761 / CIP 103989 / NBRC 15051 / NCIMB 9469 / D465).